The primary structure comprises 428 residues: Aspartate--tRNA(Asp) ligase (428 aa).

Glutamate 166 lines the L-aspartate pocket. The interval 188 to 191 (QLYK) is aspartate. Arginine 210 is an L-aspartate binding site. Residues 210–212 (RAE), 218–220 (RHL), and glutamate 351 contribute to the ATP site. Residues glutamate 351 and serine 354 each contribute to the Mg(2+) site. Positions 354 and 358 each coordinate L-aspartate. 399–402 (GLER) is an ATP binding site.

This sequence belongs to the class-II aminoacyl-tRNA synthetase family. Type 2 subfamily. In terms of assembly, homodimer. It depends on Mg(2+) as a cofactor.

The protein resides in the cytoplasm. It carries out the reaction tRNA(Asp) + L-aspartate + ATP = L-aspartyl-tRNA(Asp) + AMP + diphosphate. Catalyzes the attachment of L-aspartate to tRNA(Asp) in a two-step reaction: L-aspartate is first activated by ATP to form Asp-AMP and then transferred to the acceptor end of tRNA(Asp). This chain is Aspartate--tRNA(Asp) ligase, found in Thermoplasma acidophilum (strain ATCC 25905 / DSM 1728 / JCM 9062 / NBRC 15155 / AMRC-C165).